The primary structure comprises 1153 residues: ATP-dependent helicase/deoxyribonuclease subunit B (1153 aa).

A UvrD-like helicase ATP-binding domain is found at 1 to 289 (MELNAYIGRA…KHLEQNFNAL (289 aa)). 8 to 15 (GRAGTGKS) contacts ATP. In terms of domain architecture, UvrD-like helicase C-terminal spans 269 to 583 (LDVQRFIHND…SIGTMDLAKV (315 aa)). The [4Fe-4S] cluster site is built by cysteine 784, cysteine 1110, cysteine 1113, and cysteine 1119.

The protein belongs to the helicase family. AddB/RexB type 1 subfamily. In terms of assembly, heterodimer of AddA and AddB. It depends on Mg(2+) as a cofactor. [4Fe-4S] cluster serves as cofactor.

Functionally, the heterodimer acts as both an ATP-dependent DNA helicase and an ATP-dependent, dual-direction single-stranded exonuclease. Recognizes the chi site generating a DNA molecule suitable for the initiation of homologous recombination. The AddB subunit has 5' -&gt; 3' nuclease activity but not helicase activity. This chain is ATP-dependent helicase/deoxyribonuclease subunit B, found in Staphylococcus saprophyticus subsp. saprophyticus (strain ATCC 15305 / DSM 20229 / NCIMB 8711 / NCTC 7292 / S-41).